The chain runs to 154 residues: Prefoldin subunit alpha (154 aa).

Polar residues predominate over residues 92–102 (DNAVESLSTKQ). A disordered region spans residues 92 to 154 (DNAVESLSTK…MQDQQPEDNE (63 aa)). Residues 103-114 (DALDNRIESLRD) are compositionally biased toward basic and acidic residues. A compositionally biased stretch (low complexity) spans 128–148 (QQAQQMQQQMQQQQMQQMQDQ).

Belongs to the prefoldin subunit alpha family. Heterohexamer of two alpha and four beta subunits.

It localises to the cytoplasm. Functionally, molecular chaperone capable of stabilizing a range of proteins. Seems to fulfill an ATP-independent, HSP70-like function in archaeal de novo protein folding. The chain is Prefoldin subunit alpha from Haloquadratum walsbyi (strain DSM 16790 / HBSQ001).